The primary structure comprises 349 residues: Alanine racemase (349 aa).

Residue Lys-35 is the Proton acceptor; specific for D-alanine of the active site. The residue at position 35 (Lys-35) is an N6-(pyridoxal phosphate)lysine. Residue Arg-130 coordinates substrate. Residue Tyr-244 is the Proton acceptor; specific for L-alanine of the active site. Met-292 is a substrate binding site.

It belongs to the alanine racemase family. Requires pyridoxal 5'-phosphate as cofactor.

It carries out the reaction L-alanine = D-alanine. Its pathway is amino-acid biosynthesis; D-alanine biosynthesis; D-alanine from L-alanine: step 1/1. Its function is as follows. Catalyzes the interconversion of L-alanine and D-alanine. May also act on other amino acids. The polypeptide is Alanine racemase (alr) (Cereibacter sphaeroides (strain ATCC 17023 / DSM 158 / JCM 6121 / CCUG 31486 / LMG 2827 / NBRC 12203 / NCIMB 8253 / ATH 2.4.1.) (Rhodobacter sphaeroides)).